The sequence spans 134 residues: Nogalonic acid methyl ester cyclase (134 aa).

Nogalaviketone is bound at residue glutamine 95. Aspartate 111 acts as the Proton donor/acceptor in catalysis.

This sequence belongs to the polyketide cyclase DnrD family. Homotetramer. Dimer of dimers.

It catalyses the reaction nogalaviketone = methyl nogalonate. Its pathway is antibiotic biosynthesis. Its function is as follows. Involved in the biosynthesis of the aromatic polyketide antibiotic nogalamycin. Catalyzes the formation of nogalaviketone from nogalonic acid methyl ester (NAME), the last ring-closure step in the biosynthesis of nogalamycin. In Streptomyces nogalater, this protein is Nogalonic acid methyl ester cyclase.